A 1111-amino-acid chain; its full sequence is Probable arabinosyltransferase A (1111 aa).

13 consecutive transmembrane segments (helical) span residues 12 to 34 (IIRL…VPLL), 205 to 224 (IAVG…LSAL), 333 to 355 (VWMR…HWVL), 370 to 387 (VAVL…LPFN), 394 to 413 (PLIA…AIAL), 423 to 445 (AVVA…ALLT), 462 to 484 (GLLA…VFHS), 530 to 547 (FPVL…VVLL), 554 to 576 (GLAS…LLTF), 581 to 603 (WAIQ…AFAF), 615 to 637 (TVYI…GWFG), 652 to 674 (IAGH…LAGG), and 695 to 717 (FLAT…GSLA). The tract at residues 804 to 831 (GLVNSDASPNKPNVTFSDSAGTAGGKGP) is disordered. Residues 808–823 (SDASPNKPNVTFSDSA) are compositionally biased toward polar residues.

The protein belongs to the emb family.

It is found in the cell membrane. Its function is as follows. Arabinosyl transferase responsible for the polymerization of arabinose into the arabinan of arabinogalactan. This Mycobacterium leprae (strain TN) protein is Probable arabinosyltransferase A (embA).